We begin with the raw amino-acid sequence, 1186 residues long: ATP-dependent helicase/deoxyribonuclease subunit B (1186 aa).

Residues 1–308 (MSVKFLLGRA…AHLEKEWGKN (308 aa)) enclose the UvrD-like helicase ATP-binding domain. 8-15 (GRAGSGKT) provides a ligand contact to ATP. In terms of domain architecture, UvrD-like helicase C-terminal spans 288–620 (SLPRFKDNPA…LVGTADRSRY (333 aa)). 4 residues coordinate [4Fe-4S] cluster: Cys822, Cys1144, Cys1147, and Cys1153.

This sequence belongs to the helicase family. AddB/RexB type 1 subfamily. Heterodimer of AddA and AddB. Mg(2+) serves as cofactor. [4Fe-4S] cluster is required as a cofactor.

The heterodimer acts as both an ATP-dependent DNA helicase and an ATP-dependent, dual-direction single-stranded exonuclease. Recognizes the chi site generating a DNA molecule suitable for the initiation of homologous recombination. The AddB subunit has 5' -&gt; 3' nuclease activity but not helicase activity. The chain is ATP-dependent helicase/deoxyribonuclease subunit B from Natranaerobius thermophilus (strain ATCC BAA-1301 / DSM 18059 / JW/NM-WN-LF).